The chain runs to 142 residues: Large ribosomal subunit protein uL13 (142 aa).

This sequence belongs to the universal ribosomal protein uL13 family. Part of the 50S ribosomal subunit.

Its function is as follows. This protein is one of the early assembly proteins of the 50S ribosomal subunit, although it is not seen to bind rRNA by itself. It is important during the early stages of 50S assembly. In Psychrobacter cryohalolentis (strain ATCC BAA-1226 / DSM 17306 / VKM B-2378 / K5), this protein is Large ribosomal subunit protein uL13.